Here is a 586-residue protein sequence, read N- to C-terminus: Glutamate--tRNA ligase (586 aa).

The 'HIGH' region motif lies at 114–124; the sequence is PNPNGPWHVGH. Composition is skewed to basic and acidic residues over residues 431–443 and 459–468; these read ARGE…HEAV and HPEHPDRGDR. Residues 431-468 form a disordered region; that stretch reads ARGEGPEESHEAVEVPVDDGPDEATPQVHPEHPDRGDR.

The protein belongs to the class-I aminoacyl-tRNA synthetase family. Glutamate--tRNA ligase type 2 subfamily.

Its subcellular location is the cytoplasm. It catalyses the reaction tRNA(Glu) + L-glutamate + ATP = L-glutamyl-tRNA(Glu) + AMP + diphosphate. In terms of biological role, catalyzes the attachment of glutamate to tRNA(Glu) in a two-step reaction: glutamate is first activated by ATP to form Glu-AMP and then transferred to the acceptor end of tRNA(Glu). The polypeptide is Glutamate--tRNA ligase (Halobacterium salinarum (strain ATCC 29341 / DSM 671 / R1)).